The chain runs to 31 residues: Cytochrome b6-f complex subunit 6 (31 aa).

Residues 4–24 (LLSYFGFLFAILTLTSVLFIG) form a helical membrane-spanning segment.

This sequence belongs to the PetL family. The 4 large subunits of the cytochrome b6-f complex are cytochrome b6, subunit IV (17 kDa polypeptide, PetD), cytochrome f and the Rieske protein, while the 4 small subunits are PetG, PetL, PetM and PetN. The complex functions as a dimer.

The protein resides in the plastid. Its subcellular location is the chloroplast thylakoid membrane. Its function is as follows. Component of the cytochrome b6-f complex, which mediates electron transfer between photosystem II (PSII) and photosystem I (PSI), cyclic electron flow around PSI, and state transitions. PetL is important for photoautotrophic growth as well as for electron transfer efficiency and stability of the cytochrome b6-f complex. The polypeptide is Cytochrome b6-f complex subunit 6 (Angiopteris evecta (Mule's foot fern)).